The sequence spans 107 residues: MKNAFTLLFETIKERKRNPLSESYTNYLFLKGEDKILKKIGEECSEVIIASKNNDKEELVKEMVDVLYHCFVLLVEKNISLEDIMEEVTERNGKLSRVGDRREIDTL.

It belongs to the PRA-PH family.

It is found in the cytoplasm. The catalysed reaction is 1-(5-phospho-beta-D-ribosyl)-ATP + H2O = 1-(5-phospho-beta-D-ribosyl)-5'-AMP + diphosphate + H(+). It functions in the pathway amino-acid biosynthesis; L-histidine biosynthesis; L-histidine from 5-phospho-alpha-D-ribose 1-diphosphate: step 2/9. The sequence is that of Phosphoribosyl-ATP pyrophosphatase from Bacillus cereus (strain Q1).